The sequence spans 222 residues: Small ribosomal subunit protein uS2 (222 aa).

This sequence belongs to the universal ribosomal protein uS2 family.

This chain is Small ribosomal subunit protein uS2, found in Karelsulcia muelleri (strain GWSS) (Sulcia muelleri).